Consider the following 359-residue polypeptide: Peptide chain release factor 1 (359 aa).

N5-methylglutamine is present on Gln-235. The interval 280-306 (AERQRADSERSADRKSQVGSGDRSERI) is disordered.

Belongs to the prokaryotic/mitochondrial release factor family. Post-translationally, methylated by PrmC. Methylation increases the termination efficiency of RF1.

Its subcellular location is the cytoplasm. Its function is as follows. Peptide chain release factor 1 directs the termination of translation in response to the peptide chain termination codons UAG and UAA. In Rhizobium johnstonii (strain DSM 114642 / LMG 32736 / 3841) (Rhizobium leguminosarum bv. viciae), this protein is Peptide chain release factor 1.